Consider the following 325-residue polypeptide: Hydroxymethylglutaryl-CoA lyase, mitochondrial (325 aa).

A mitochondrion-targeting transit peptide spans 1–27 (MATVKKVLPRRLVGLATLRAVSTSSVG). In terms of domain architecture, Pyruvate carboxyltransferase spans 33-300 (VKIVEVGPRD…HTGVNLQKLL (268 aa)). Arg41 contacts substrate. Position 42 (Asp42) interacts with a divalent metal cation. The residue at position 48 (Lys48) is an N6-acetyllysine; alternate. Lys48 bears the N6-succinyllysine; alternate mark. Lys111 is modified (N6-acetyllysine). Residues Lys137 and Lys179 each carry the N6-acetyllysine; alternate modification. 2 positions are modified to N6-succinyllysine; alternate: Lys137 and Lys179. 2 residues coordinate a divalent metal cation: His233 and His235. Cys266 is an active-site residue. Residue Asn275 participates in a divalent metal cation binding. A Microbody targeting signal motif is present at residues 323 to 325 (CKL). At Lys324 the chain carries N6-acetyllysine.

Belongs to the HMG-CoA lyase family. Homodimer; disulfide-linked. Can also form homotetramers.

It is found in the mitochondrion matrix. Its subcellular location is the peroxisome. The catalysed reaction is (3S)-3-hydroxy-3-methylglutaryl-CoA = acetoacetate + acetyl-CoA. Its pathway is metabolic intermediate metabolism; (S)-3-hydroxy-3-methylglutaryl-CoA degradation; acetoacetate from (S)-3-hydroxy-3-methylglutaryl-CoA: step 1/1. In terms of biological role, mitochondrial 3-hydroxy-3-methylglutaryl-CoA lyase that catalyzes a cation-dependent cleavage of (S)-3-hydroxy-3-methylglutaryl-CoA into acetyl-CoA and acetoacetate, a key step in ketogenesis. Terminal step in leucine catabolism. Ketone bodies (beta-hydroxybutyrate, acetoacetate and acetone) are essential as an alternative source of energy to glucose, as lipid precursors and as regulators of metabolism. The chain is Hydroxymethylglutaryl-CoA lyase, mitochondrial (HMGCL) from Bos taurus (Bovine).